A 463-amino-acid chain; its full sequence is Sporulation-specific protein 22 (463 aa).

Residues 1–25 (MNRITRKSCLFAIIFASLFVTHALG) form the signal peptide. LRR repeat units lie at residues 127–147 (SPEL…LFQL), 185–206 (IEII…NFNK), 207–233 (VQEI…TIRG), 251–275 (LREV…KVKS), and 302–325 (INNV…LMIA). N-linked (GlcNAc...) asparagine glycans are attached at residues asparagine 256, asparagine 314, and asparagine 327. Asparagine 440 carries GPI-anchor amidated asparagine lipidation. The propeptide at 441–463 (SANPSMQLDPLLFGTCLVAMLLF) is removed in mature form.

Belongs to the SPS2 family.

Its subcellular location is the cell membrane. In terms of biological role, redundant with SPS2 for the organization of the beta-glucan layer of the spore wall. The protein is Sporulation-specific protein 22 (SPS22) of Saccharomyces cerevisiae (strain ATCC 204508 / S288c) (Baker's yeast).